A 154-amino-acid chain; its full sequence is Yop proteins translocation protein O (154 aa).

Positions 132–154 (ELNQQHYQEEQEQEEFLQHHRNA) are disordered.

It belongs to the SpaM family.

Its function is as follows. Component of the yop secretion machinery. In Yersinia pseudotuberculosis serotype I (strain IP32953), this protein is Yop proteins translocation protein O (yscO).